The following is a 65-amino-acid chain: Large ribosomal subunit protein bL35 (65 aa).

It belongs to the bacterial ribosomal protein bL35 family.

This chain is Large ribosomal subunit protein bL35, found in Thermoanaerobacter pseudethanolicus (strain ATCC 33223 / 39E) (Clostridium thermohydrosulfuricum).